The primary structure comprises 645 residues: tRNA 5-methylaminomethyl-2-thiouridine biosynthesis bifunctional protein MnmC (645 aa).

Residues 1-230 (MPMSEPIDWL…KRHNLHAVFD (230 aa)) form a tRNA (mnm(5)s(2)U34)-methyltransferase region. The segment at 254-645 (LGAGIAGAAA…LASERLGRRR (392 aa)) is FAD-dependent cmnm(5)s(2)U34 oxidoreductase.

In the N-terminal section; belongs to the methyltransferase superfamily. tRNA (mnm(5)s(2)U34)-methyltransferase family. It in the C-terminal section; belongs to the DAO family. FAD serves as cofactor.

The protein localises to the cytoplasm. It catalyses the reaction 5-aminomethyl-2-thiouridine(34) in tRNA + S-adenosyl-L-methionine = 5-methylaminomethyl-2-thiouridine(34) in tRNA + S-adenosyl-L-homocysteine + H(+). Functionally, catalyzes the last two steps in the biosynthesis of 5-methylaminomethyl-2-thiouridine (mnm(5)s(2)U) at the wobble position (U34) in tRNA. Catalyzes the FAD-dependent demodification of cmnm(5)s(2)U34 to nm(5)s(2)U34, followed by the transfer of a methyl group from S-adenosyl-L-methionine to nm(5)s(2)U34, to form mnm(5)s(2)U34. The polypeptide is tRNA 5-methylaminomethyl-2-thiouridine biosynthesis bifunctional protein MnmC (Delftia acidovorans (strain DSM 14801 / SPH-1)).